Here is a 208-residue protein sequence, read N- to C-terminus: Large ribosomal subunit protein uL3 (208 aa).

Q149 carries the post-translational modification N5-methylglutamine.

The protein belongs to the universal ribosomal protein uL3 family. As to quaternary structure, part of the 50S ribosomal subunit. Forms a cluster with proteins L14 and L19. Methylated by PrmB.

In terms of biological role, one of the primary rRNA binding proteins, it binds directly near the 3'-end of the 23S rRNA, where it nucleates assembly of the 50S subunit. The polypeptide is Large ribosomal subunit protein uL3 (Haemophilus ducreyi (strain 35000HP / ATCC 700724)).